A 185-amino-acid polypeptide reads, in one-letter code: MIKDILNKADEKMNKTVDVLVKELASMKAGRANPAILDKIEVEYYGAMTPISQLAGISIPEARILAIQPWDKSALKSIEKAILKSDLGINPSNDGEIIRLIIPELTEETRKNIVKNIKKTGEDSKVAIRGIRRECNDKFKALKKKNDISEDEIKKGEEQIQKKTDIFIKNIDAILEKKEKEIMSL.

This sequence belongs to the RRF family.

Its subcellular location is the cytoplasm. In terms of biological role, responsible for the release of ribosomes from messenger RNA at the termination of protein biosynthesis. May increase the efficiency of translation by recycling ribosomes from one round of translation to another. In Clostridium kluyveri (strain NBRC 12016), this protein is Ribosome-recycling factor.